A 359-amino-acid polypeptide reads, in one-letter code: Membrane-bound lytic murein transglycosylase C (359 aa).

The first 16 residues, 1–16 (MKKYLALALIAPLLIS), serve as a signal peptide directing secretion. Residue Cys-17 is the site of N-palmitoyl cysteine attachment. The S-diacylglycerol cysteine moiety is linked to residue Cys-17.

This sequence belongs to the transglycosylase Slt family.

It localises to the cell outer membrane. It catalyses the reaction Exolytic cleavage of the (1-&gt;4)-beta-glycosidic linkage between N-acetylmuramic acid (MurNAc) and N-acetylglucosamine (GlcNAc) residues in peptidoglycan, from either the reducing or the non-reducing ends of the peptidoglycan chains, with concomitant formation of a 1,6-anhydrobond in the MurNAc residue.. Its function is as follows. Murein-degrading enzyme. May play a role in recycling of muropeptides during cell elongation and/or cell division. This chain is Membrane-bound lytic murein transglycosylase C, found in Escherichia coli O127:H6 (strain E2348/69 / EPEC).